The sequence spans 474 residues: MNAVTDLKHDYLVADIKLADWGRKEIAIAETEMPGLMAIRDEFAASQPLKGARIAGSLHMTIQTAVLIETLKALGADVRWASCNIFSTQDHAAAAIAATGTPVFAFKGESLQEYWDFTHRIFEWADGGTPNMILDDGGDATLLLHLGAKAEKDVSVLAHPGSEEETFLFAAIKEKLAKDATFYSRNLDAIKGVTEETTTGVHRLYQMAQRGELRFPAINVNDSVTKSKFDNLYGCRESLVDGIKRATDVMIAGKVAIVAGYGDVGKGSAQALRALSAQVWVTEIDPICALQAAMEGYRVVTMDYAAEHGDIFVTCTGNYHVITHDHMAKMKDQAIVCNIGHFDNEIDIASVEKYQWEEIKPQVDHVIFPDGKKIIILAKGRLVNLGCATGHPSYVMSSSFANQTIAQIELWTEAVKGSNKYPVGVYTLPKHLDEKVARLQLKKLNAQLTELTDQQAAYIGVSKEGPYKADHYRY.

Residues threonine 61, aspartate 136, and glutamate 196 each coordinate substrate. 197–199 (TTT) provides a ligand contact to NAD(+). Residues lysine 226 and aspartate 230 each contribute to the substrate site. NAD(+)-binding positions include asparagine 231, 260 to 265 (GYGDVG), glutamate 283, asparagine 318, 339 to 341 (IGH), and asparagine 384.

This sequence belongs to the adenosylhomocysteinase family. NAD(+) serves as cofactor.

The protein resides in the cytoplasm. The enzyme catalyses S-adenosyl-L-homocysteine + H2O = L-homocysteine + adenosine. The protein operates within amino-acid biosynthesis; L-homocysteine biosynthesis; L-homocysteine from S-adenosyl-L-homocysteine: step 1/1. In terms of biological role, may play a key role in the regulation of the intracellular concentration of adenosylhomocysteine. This Ralstonia pickettii (strain 12J) protein is Adenosylhomocysteinase.